A 432-amino-acid chain; its full sequence is 5'-deoxyadenosine deaminase (432 aa).

H63 and H65 together coordinate Zn(2+). Substrate contacts are provided by E92 and H184. Residue H211 coordinates Zn(2+). The substrate site is built by E214 and D299. Zn(2+) is bound at residue D299.

The protein belongs to the metallo-dependent hydrolases superfamily. MTA/SAH deaminase family. As to quaternary structure, homotetramer. Zn(2+) serves as cofactor.

The catalysed reaction is 5'-deoxyadenosine + H2O + H(+) = 5'-deoxyinosine + NH4(+). It carries out the reaction S-adenosyl-L-homocysteine + H2O + H(+) = S-inosyl-L-homocysteine + NH4(+). The enzyme catalyses S-methyl-5'-thioadenosine + H2O + H(+) = S-methyl-5'-thioinosine + NH4(+). It catalyses the reaction adenosine + H2O + H(+) = inosine + NH4(+). The protein operates within amino-acid biosynthesis; S-adenosyl-L-methionine biosynthesis. Functionally, catalyzes the deamination of three SAM-derived enzymatic products, namely 5'-deoxyadenosine, S-adenosyl-L-homocysteine, and 5'-methylthioadenosine, to produce the inosine analogs. Can also deaminate adenosine. The preferred substrate for this enzyme is 5'-deoxyadenosine, but all these substrates are efficiently deaminated. Likely functions in a S-adenosyl-L-methionine (SAM) recycling pathway from S-adenosyl-L-homocysteine (SAH) produced from SAM-dependent methylation reactions. May also be involved in the recycling of 5'-deoxyadenosine, whereupon the 5'-deoxyribose moiety of 5'-deoxyinosine is further metabolized to deoxyhexoses used for the biosynthesis of aromatic amino acids in methanogens. The protein is 5'-deoxyadenosine deaminase of Methanosarcina acetivorans (strain ATCC 35395 / DSM 2834 / JCM 12185 / C2A).